The primary structure comprises 801 residues: Fibroblast growth factor receptor 3 (801 aa).

The N-terminal stretch at 1–20 is a signal peptide; sequence MVVPACVLVFCVAVVAGATS. The Extracellular portion of the chain corresponds to 21 to 369; the sequence is EPPGPEQRVV…TDEAGSVYAG (349 aa). Residues 22 to 124 enclose the Ig-like C2-type 1 domain; that stretch reads PPGPEQRVVR…VLCHFSVRVT (103 aa). A disulfide bridge connects residues cysteine 59 and cysteine 107. Asparagine 96 carries N-linked (GlcNAc...) asparagine glycosylation. The tract at residues 125 to 146 is disordered; sequence DAPSSGDDEDGEDVAEDTGAPY. The segment covering 130-140 has biased composition (acidic residues); sequence GDDEDGEDVAE. 2 Ig-like C2-type domains span residues 145–238 and 247–349; these read PYWT…YTLD and PILQ…AWLV. Cysteines 170 and 222 form a disulfide. Asparagine 219, asparagine 256, asparagine 288, asparagine 309, and asparagine 322 each carry an N-linked (GlcNAc...) asparagine glycan. Residues cysteine 269 and cysteine 333 are joined by a disulfide bond. The helical transmembrane segment at 370 to 390 threads the bilayer; sequence VLSYGVVFFLFILVVAAVILC. Over 391-801 the chain is Cytoplasmic; sequence RLRSPPKKGL…GPPSNGGPRT (411 aa). Serine 438 and serine 439 each carry phosphoserine. The 291-residue stretch at 466 to 756 folds into the Protein kinase domain; that stretch reads LTLGKPLGEG…LTVTSTDEYL (291 aa). Residues 472–480 and lysine 502 contribute to the ATP site; that span reads LGEGCFGQV. The active-site Proton acceptor is aspartate 611. Tyrosine 641, tyrosine 642, tyrosine 719, and tyrosine 755 each carry phosphotyrosine; by autocatalysis. Positions 762–801 are disordered; the sequence is FEQYSPGGQDTPSSSSSGDDSVFTHDLLPPGPPSNGGPRT. Over residues 766–782 the composition is skewed to low complexity; that stretch reads SPGGQDTPSSSSSGDDS. Pro residues predominate over residues 790 to 801; sequence PPGPPSNGGPRT.

The protein belongs to the protein kinase superfamily. Tyr protein kinase family. Fibroblast growth factor receptor subfamily. Monomer. Homodimer after ligand binding. Interacts with FGF1, FGF2, FGF4, FGF6; FGF8, FGF9, FGF10, FGF17, FGF18, FGF19, FGF20 and FGF23 (in vitro). Interacts with KLB. Affinity for fibroblast growth factors (FGFs) is increased by heparan sulfate glycosaminoglycans that function as coreceptors. Likewise, KLB increases the affinity for FGF19 and FGF21. Interacts with PIK3R1, PLCG1, SOCS1 and SOCS3. In terms of processing, autophosphorylated. Binding of FGF family members together with heparan sulfate proteoglycan or heparin promotes receptor dimerization and autophosphorylation on tyrosine residues. Autophosphorylation occurs in trans between the two FGFR molecules present in the dimer. Phosphorylation at Tyr-719 is essential for stimulation of cell proliferation and activation of PIK3R1, STAT1 and MAP kinase signaling. Phosphorylation at Tyr-755 is required for interaction with PIK3R1 and PLCG1. Ubiquitinated. Is rapidly ubiquitinated after ligand binding and autophosphorylation, leading to receptor internalization and degradation. Subject to both proteasomal and lysosomal degradation. Post-translationally, N-glycosylated in the endoplasmic reticulum. The N-glycan chains undergo further maturation to an Endo H-resistant form in the Golgi apparatus. In terms of tissue distribution, in embryo, expressed in heart, lung, kidney, skin, head and liver but not in muscle. In adult, highest levels in brain. Also expressed in liver, lung, kidney, testis, ovary and uterus. Very low levels in heart, thymus, spleen and muscle.

It is found in the cell membrane. The protein resides in the cytoplasmic vesicle. Its subcellular location is the endoplasmic reticulum. The catalysed reaction is L-tyrosyl-[protein] + ATP = O-phospho-L-tyrosyl-[protein] + ADP + H(+). Its activity is regulated as follows. Present in an inactive conformation in the absence of bound ligand. Ligand binding leads to dimerization and activation by autophosphorylation on tyrosine residues. Its function is as follows. Tyrosine-protein kinase that acts as a cell-surface receptor for fibroblast growth factors and plays an essential role in the regulation of cell proliferation, differentiation and apoptosis. Plays an essential role in the regulation of chondrocyte differentiation, proliferation and apoptosis, and is required for normal skeleton development. Regulates both osteogenesis and postnatal bone mineralization by osteoblasts. Promotes apoptosis in chondrocytes, but can also promote cancer cell proliferation. Required for normal development of the inner ear. Phosphorylates PLCG1, CBL and FRS2. Ligand binding leads to the activation of several signaling cascades. Activation of PLCG1 leads to the production of the cellular signaling molecules diacylglycerol and inositol 1,4,5-trisphosphate. Phosphorylation of FRS2 triggers recruitment of GRB2, GAB1, PIK3R1 and SOS1, and mediates activation of RAS, MAPK1/ERK2, MAPK3/ERK1 and the MAP kinase signaling pathway, as well as of the AKT1 signaling pathway. Plays a role in the regulation of vitamin D metabolism. Mutations that lead to constitutive kinase activation or impair normal FGFR3 maturation, internalization and degradation lead to aberrant signaling. Over-expressed or constitutively activated FGFR3 promotes activation of STAT1, STAT5A and STAT5B. Plays a role in postnatal lung development. This is Fibroblast growth factor receptor 3 (Fgfr3) from Mus musculus (Mouse).